The following is a 362-amino-acid chain: N5-carboxyaminoimidazole ribonucleotide synthase (362 aa).

ATP-binding positions include arginine 85, lysine 125, 130-136, 158-161, glutamate 166, and 244-245; these read GYDGRGQ, EKFI, and NE. The region spanning 89-274 is the ATP-grasp domain; the sequence is KSLLDELNLS…QFELHLRALL (186 aa).

Belongs to the PurK/PurT family. Homodimer.

It catalyses the reaction 5-amino-1-(5-phospho-beta-D-ribosyl)imidazole + hydrogencarbonate + ATP = 5-carboxyamino-1-(5-phospho-D-ribosyl)imidazole + ADP + phosphate + 2 H(+). Its pathway is purine metabolism; IMP biosynthesis via de novo pathway; 5-amino-1-(5-phospho-D-ribosyl)imidazole-4-carboxylate from 5-amino-1-(5-phospho-D-ribosyl)imidazole (N5-CAIR route): step 1/2. Its function is as follows. Catalyzes the ATP-dependent conversion of 5-aminoimidazole ribonucleotide (AIR) and HCO(3)(-) to N5-carboxyaminoimidazole ribonucleotide (N5-CAIR). The polypeptide is N5-carboxyaminoimidazole ribonucleotide synthase (Haemophilus influenzae (strain ATCC 51907 / DSM 11121 / KW20 / Rd)).